The chain runs to 364 residues: DNA replication and repair protein RecF (364 aa).

30–37 (GNNGQGKT) serves as a coordination point for ATP.

The protein belongs to the RecF family.

It localises to the cytoplasm. In terms of biological role, the RecF protein is involved in DNA metabolism; it is required for DNA replication and normal SOS inducibility. RecF binds preferentially to single-stranded, linear DNA. It also seems to bind ATP. The chain is DNA replication and repair protein RecF from Geobacter sp. (strain M21).